A 29-amino-acid polypeptide reads, in one-letter code: Cyclotide mela-4 (29 aa).

Positions 1–29 form a cross-link, cyclopeptide (Gly-Asn); it reads GKPICGETCFKGKCYTPGCTCSYPICKKN. Disulfide bonds link Cys-5-Cys-19, Cys-9-Cys-21, and Cys-14-Cys-26.

Post-translationally, this is a cyclic peptide. In terms of processing, contains 3 disulfide bonds.

Probably participates in a plant defense mechanism (Potential). Binds to and induces leakage in phospholipd membranes, particularly ones containing 1-palmitoyl-2-oleophosphatidylethanolamine (POPE). In vitro, displays cytotoxicity against cultured cells. Not active against Gram-negative bacterium E.coli ATCC 25922 or Gram-positive bacterium S.aureus ATCC 25923 up to a concentration of 64 uM. This is Cyclotide mela-4 from Melicytus latifolius (Norfolk Island mahoe).